Reading from the N-terminus, the 854-residue chain is Protein SEY1 homolog (854 aa).

The Cytoplasmic segment spans residues 1-724; that stretch reads MAAFSGETAV…LRNIESGKQS (724 aa). In terms of domain architecture, GB1/RHD3-type G spans 49–291; the sequence is GVNYHVVGVF…NSNFLFSNCS (243 aa). GTP is bound at residue 59–66; sequence GGQSSGKS. A coiled-coil region spans residues 336-386; it reads KHAAIEEFKEVCEEYTKKIQRGDVIPQFTRALEETIERLLKNFSDQTKLYK. Residues 725–745 form a helical membrane-spanning segment; the sequence is LPPWVLPVMLLLGWNELYYLL. Residues 746–748 lie on the Lumenal side of the membrane; it reads TSP. The helical transmembrane segment at 749–769 threads the bilayer; it reads ILLIAIIVIAVLFFKTFLKSQ. The Cytoplasmic portion of the chain corresponds to 770-854; the sequence is LEVLEEKCPV…CRESRDKGED (85 aa). The segment at 808–854 is disordered; sequence GGGGAQFRDPTQATSVSGASAGVSSESSSAASPRRRVCRESRDKGED. The span at 822 to 839 shows a compositional bias: low complexity; sequence SVSGASAGVSSESSSAAS. The span at 845–854 shows a compositional bias: basic and acidic residues; it reads CRESRDKGED.

Belongs to the TRAFAC class dynamin-like GTPase superfamily. GB1/RHD3 GTPase family. RHD3 subfamily.

It localises to the endoplasmic reticulum membrane. In terms of biological role, probable GTP-binding protein that may be involved in cell development. The protein is Protein SEY1 homolog of Trypanosoma brucei brucei (strain 927/4 GUTat10.1).